A 300-amino-acid polypeptide reads, in one-letter code: Protoheme IX farnesyltransferase 1 (300 aa).

Helical transmembrane passes span 28–48 (VVALMLLTVLVGMCLAMPTIL), 54–74 (VAGLLGIAMMAGSAAALNHLI), 100–120 (ALLFAALLGCLGFVILYVFTN), 122–142 (LTAWLTFASLIGYALIYTAYL), 149–169 (NIVIGGLAGAMPPLLGWTAVT), 176–196 (ALLLVIIIFLWTPPHFWALAI), 222–242 (CILLYTILLAMACLLPVLVGM), 243–263 (SGPLYFVCSSLLSTGFIYKAW), and 280–300 (FSIYHLMLLFMALLLDHYLWA).

The protein belongs to the UbiA prenyltransferase family. Protoheme IX farnesyltransferase subfamily.

The protein localises to the cell inner membrane. The catalysed reaction is heme b + (2E,6E)-farnesyl diphosphate + H2O = Fe(II)-heme o + diphosphate. Its pathway is porphyrin-containing compound metabolism; heme O biosynthesis; heme O from protoheme: step 1/1. In terms of biological role, converts heme B (protoheme IX) to heme O by substitution of the vinyl group on carbon 2 of heme B porphyrin ring with a hydroxyethyl farnesyl side group. This Shewanella sp. (strain ANA-3) protein is Protoheme IX farnesyltransferase 1.